Here is a 1021-residue protein sequence, read N- to C-terminus: Receptor-like protein EIX2 (1021 aa).

The first 24 residues, 1-24 (MGKRTNPRHFLVTWSLLLLETAFG), serve as a signal peptide directing secretion. Positions 25-109 (LTSREVNKTL…PILTGKVSPS (85 aa)) are N-cap. At 25–963 (LTSREVNKTL…DDDDEFSSLE (939 aa)) the chain is on the extracellular side. An N-linked (GlcNAc...) asparagine glycan is attached at asparagine 31. LRR repeat units follow at residues 113–136 (LEYL…RFIG), 138–161 (LKRL…QFQN), 162–184 (LTSL…VWLS), 186–211 (LSSL…ITKV), 214–237 (LKEL…VANS), and 239–262 (LISL…SWLF). N-linked (GlcNAc...) asparagine glycans are attached at residues asparagine 145 and asparagine 161. The N-linked (GlcNAc...) asparagine glycan is linked to asparagine 236. Asparagine 263 is a glycosylation site (N-linked (GlcNAc...) asparagine). LRR repeat units lie at residues 265 to 288 (STSL…RFGS), 290 to 313 (MYLE…SFGN), 314 to 337 (LTRL…LFLR), 342 to 365 (RKSL…VTRF), 366 to 388 (SSLK…RVGQ), 389 to 412 (VSSL…LALF), 413 to 436 (PSLR…IGKL), 437 to 459 (SQLR…MGQL), 461 to 483 (NLER…HFSN), 484 to 507 (LSSL…DWVP), 509 to 532 (FQLQ…LQTQ), 533 to 555 (NNYT…WFSN), 557 to 581 (PPEL…IVSK), and 583 to 607 (DYMI…NIQI). A glycan (N-linked (GlcNAc...) asparagine) is linked at asparagine 313. A glycan (N-linked (GlcNAc...) asparagine) is linked at asparagine 483. Residues asparagine 534, asparagine 544, asparagine 564, and asparagine 593 are each glycosylated (N-linked (GlcNAc...) asparagine). The LRR 21; degenerate repeat unit spans residues 608 to 626 (FYLHKNHFSGSISSICRNT). LRR repeat units follow at residues 627–651 (IGAA…WMNM), 652–675 (SNLA…LGSL), 677–698 (NLEA…FSQC), 699–722 (QLLQ…IGTD), 723–747 (LLQL…ICQL), and 749–773 (FLQI…NFTI). 2 N-linked (GlcNAc...) asparagine glycosylation sites follow: asparagine 650 and asparagine 663. Residues asparagine 770 and asparagine 778 are each glycosylated (N-linked (GlcNAc...) asparagine). LRR repeat units lie at residues 818–842 (LLYL…IAEM), 843–866 (RGLR…IGQM), 867–890 (KLLE…LSNL), and 892–913 (FLSV…STQL). N-linked (GlcNAc...) asparagine glycosylation is found at asparagine 849, asparagine 856, and asparagine 889. The segment at 914–963 (QSFDRSSYSGNAQLCGPPLEECPGYAPPIDRGSNTNPQEHDDDDEFSSLE) is C-cap/acidic domain. The chain crosses the membrane as a helical span at residues 964-984 (FYVSMVLGFFVTFWGILGCLI). At 985 to 1021 (VNRSWRNAYFTFLTDMKSWLHMTSRVCFARLKGKLRN) the chain is on the cytoplasmic side.

This sequence belongs to the RLP family. Interacts with EIX elicitor protein.

It is found in the cell membrane. Involved in plant defense. Confers resistance to the fungal pathogen T.viride through recognition of the EIX elicitor protein. The sequence is that of Receptor-like protein EIX2 from Solanum lycopersicum (Tomato).